Here is an 824-residue protein sequence, read N- to C-terminus: Leucine--tRNA ligase (824 aa).

The 'HIGH' region motif lies at 42-52 (PYPSGHLHMGH). The short motif at 581 to 585 (KMSKS) is the 'KMSKS' region element. ATP is bound at residue Lys-584.

Belongs to the class-I aminoacyl-tRNA synthetase family.

Its subcellular location is the cytoplasm. The catalysed reaction is tRNA(Leu) + L-leucine + ATP = L-leucyl-tRNA(Leu) + AMP + diphosphate. The protein is Leucine--tRNA ligase of Syntrophomonas wolfei subsp. wolfei (strain DSM 2245B / Goettingen).